The chain runs to 192 residues: uncharacterized protein (192 aa).

The Nudix hydrolase domain maps to 29–160; sequence HRQAAVLIPI…PLDIYRRGDS (132 aa). Residues 67–89 carry the Nudix box motif; that stretch reads GAVDDTDASVIAAALREAEEEVA. 2 residues coordinate Mg(2+): Glu-83 and Glu-87.

Belongs to the Nudix hydrolase family. PCD1 subfamily. Mn(2+) is required as a cofactor. Requires Mg(2+) as cofactor.

Its function is as follows. Probably mediates the hydrolysis of some nucleoside diphosphate derivatives. This is an uncharacterized protein from Escherichia coli O139:H28 (strain E24377A / ETEC).